The primary structure comprises 171 residues: Probable DNA-directed RNA polymerase subunit delta (171 aa).

An HTH HARE-type domain is found at 14–81; it reads MALVEIAYEI…SDQTWGLRSW (68 aa). The tract at residues 138-171 is disordered; it reads EFDEIDEADDDELDDLEDEILDDDEDFDEEEDEE.

It belongs to the RpoE family. As to quaternary structure, RNAP is composed of a core of 2 alpha, a beta and a beta' subunits. The core is associated with a delta subunit and one of several sigma factors.

Functionally, participates in both the initiation and recycling phases of transcription. In the presence of the delta subunit, RNAP displays an increased specificity of transcription, a decreased affinity for nucleic acids, and an increased efficiency of RNA synthesis because of enhanced recycling. This Bacillus licheniformis (strain ATCC 14580 / DSM 13 / JCM 2505 / CCUG 7422 / NBRC 12200 / NCIMB 9375 / NCTC 10341 / NRRL NRS-1264 / Gibson 46) protein is Probable DNA-directed RNA polymerase subunit delta.